The sequence spans 333 residues: Viral cathepsin (333 aa).

Residues 1–20 (MTKLLNFVILASVLTVTAHA) form the signal peptide. Positions 21–124 (LTYDLNNSDE…VIKDEPQALL (104 aa)) are cleaved as a propeptide — activation peptide. Cystine bridges form between Cys-145–Cys-186, Cys-179–Cys-219, and Cys-272–Cys-321. Cys-148 is a catalytic residue. A glycan (N-linked (GlcNAc...) asparagine; by host) is linked at Asn-170. Active-site residues include His-280 and Asn-300.

It belongs to the peptidase C1 family. Post-translationally, synthesized as an inactive proenzyme and activated by proteolytic removal of the inhibitory propeptide.

The enzyme catalyses Endopeptidase of broad specificity, hydrolyzing substrates of both cathepsin L and cathepsin B.. Functionally, cysteine protease that plays an essential role in host liquefaction to facilitate horizontal transmission of the virus. May participate in the degradation of foreign protein expressed by the baculovirus system. The protein is Viral cathepsin (VCATH) of Cydia pomonella granulosis virus (isolate Mexico/1963) (CpGV).